A 159-amino-acid polypeptide reads, in one-letter code: Phosphopantetheine adenylyltransferase (159 aa).

T10 provides a ligand contact to substrate. Residues 10–11 and H18 contribute to the ATP site; that span reads TF. Substrate is bound by residues K42, M74, and R88. ATP-binding positions include 89–91, E99, and 124–130; these read GLR and WSFISSS.

It belongs to the bacterial CoaD family. In terms of assembly, homohexamer. Requires Mg(2+) as cofactor.

The protein resides in the cytoplasm. It carries out the reaction (R)-4'-phosphopantetheine + ATP + H(+) = 3'-dephospho-CoA + diphosphate. The protein operates within cofactor biosynthesis; coenzyme A biosynthesis; CoA from (R)-pantothenate: step 4/5. In terms of biological role, reversibly transfers an adenylyl group from ATP to 4'-phosphopantetheine, yielding dephospho-CoA (dPCoA) and pyrophosphate. In Yersinia pestis, this protein is Phosphopantetheine adenylyltransferase.